Consider the following 55-residue polypeptide: UPF0434 protein BARBAKC583_1098 (55 aa).

It belongs to the UPF0434 family.

This Bartonella bacilliformis (strain ATCC 35685 / KC583 / Herrer 020/F12,63) protein is UPF0434 protein BARBAKC583_1098.